The primary structure comprises 329 residues: Ribosomal RNA small subunit methyltransferase H (329 aa).

Residues 39–41, Asp56, Phe85, Asp106, and Gln113 each bind S-adenosyl-L-methionine; that span reads GGY. The disordered stretch occupies residues 289–308; sequence SGAIRPTPEEEARNPRARSA.

Belongs to the methyltransferase superfamily. RsmH family.

It localises to the cytoplasm. It catalyses the reaction cytidine(1402) in 16S rRNA + S-adenosyl-L-methionine = N(4)-methylcytidine(1402) in 16S rRNA + S-adenosyl-L-homocysteine + H(+). Specifically methylates the N4 position of cytidine in position 1402 (C1402) of 16S rRNA. The chain is Ribosomal RNA small subunit methyltransferase H from Novosphingobium aromaticivorans (strain ATCC 700278 / DSM 12444 / CCUG 56034 / CIP 105152 / NBRC 16084 / F199).